The chain runs to 312 residues: MEDFHHISVLPDEVLQALSPKSGGVYVDGTLGGAGHAGLILTASAPEGRLIGFDRDEEAIAVARQRLSVFGGRVRIIHRNFAGIAQALAEIGVDGIDGFVLDLGVSSHQLDRDERGFSFMHDAPLDMRMDRSSGQSAADLVNTLPEAELYRIISEYGEERWAKRVASFIVKARDERPIETTLELVDVIKGAIPKAKWEERLHPATRTFQALRIAVNEELKSLEEGLQGLLSLLKQGGRGAVISFHSLEDRIVKEGFRAAATGCTCPKELPICVCGRVPRFKLVTRKPITAGESEVAANPRSRSAKLRVVEKI.

Residues alanine 34 to histidine 36, aspartate 54, phenylalanine 81, aspartate 102, and glutamine 109 each bind S-adenosyl-L-methionine.

The protein belongs to the methyltransferase superfamily. RsmH family.

The protein resides in the cytoplasm. It catalyses the reaction cytidine(1402) in 16S rRNA + S-adenosyl-L-methionine = N(4)-methylcytidine(1402) in 16S rRNA + S-adenosyl-L-homocysteine + H(+). In terms of biological role, specifically methylates the N4 position of cytidine in position 1402 (C1402) of 16S rRNA. This is Ribosomal RNA small subunit methyltransferase H from Geobacter sp. (strain M21).